A 173-amino-acid chain; its full sequence is Bifunctional protein PyrR (173 aa).

The PRPP-binding motif lies at 93–105; it reads VILVDDVLYTGRT.

The protein belongs to the purine/pyrimidine phosphoribosyltransferase family. PyrR subfamily. In terms of assembly, homodimer and homohexamer; in equilibrium.

It catalyses the reaction UMP + diphosphate = 5-phospho-alpha-D-ribose 1-diphosphate + uracil. Its function is as follows. Regulates transcriptional attenuation of the pyrimidine nucleotide (pyr) operon by binding in a uridine-dependent manner to specific sites on pyr mRNA. This disrupts an antiterminator hairpin in the RNA and favors formation of a downstream transcription terminator, leading to a reduced expression of downstream genes. Also displays a weak uracil phosphoribosyltransferase activity which is not physiologically significant. In Streptococcus pneumoniae (strain 70585), this protein is Bifunctional protein PyrR.